The primary structure comprises 419 residues: Creatine kinase S-type, mitochondrial (419 aa).

Residues methionine 1 to alanine 39 constitute a mitochondrion transit peptide. The cardiolipin-binding stretch occupies residues aspartate 40 to methionine 64. Residues lysine 46–asparagine 132 enclose the Phosphagen kinase N-terminal domain. Positions tyrosine 159–leucine 401 constitute a Phosphagen kinase C-terminal domain. Residues serine 162–arginine 166 and histidine 225 each bind ATP. Tyrosine 255 is subject to Phosphotyrosine. ATP contacts are provided by residues arginine 270, arginine 326, arginine 354–valine 359, and aspartate 369. Threonine 356 is modified (phosphothreonine).

This sequence belongs to the ATP:guanido phosphotransferase family. As to quaternary structure, exists as an octamer composed of four CKMT2 homodimers. In terms of tissue distribution, sarcomere-specific. Found only in heart and skeletal muscles.

The protein localises to the mitochondrion inner membrane. The enzyme catalyses creatine + ATP = N-phosphocreatine + ADP + H(+). Its function is as follows. Reversibly catalyzes the transfer of phosphate between ATP and various phosphogens (e.g. creatine phosphate). Creatine kinase isoenzymes play a central role in energy transduction in tissues with large, fluctuating energy demands, such as skeletal muscle, heart, brain and spermatozoa. This is Creatine kinase S-type, mitochondrial (Ckmt2) from Rattus norvegicus (Rat).